Consider the following 121-residue polypeptide: Small ribosomal subunit protein uS13 (121 aa).

The segment at Val-97–Lys-121 is disordered. Over residues Gln-100–Lys-121 the composition is skewed to basic residues.

The protein belongs to the universal ribosomal protein uS13 family. In terms of assembly, part of the 30S ribosomal subunit. Forms a loose heterodimer with protein S19. Forms two bridges to the 50S subunit in the 70S ribosome.

In terms of biological role, located at the top of the head of the 30S subunit, it contacts several helices of the 16S rRNA. In the 70S ribosome it contacts the 23S rRNA (bridge B1a) and protein L5 of the 50S subunit (bridge B1b), connecting the 2 subunits; these bridges are implicated in subunit movement. Contacts the tRNAs in the A and P-sites. The polypeptide is Small ribosomal subunit protein uS13 (Parasynechococcus marenigrum (strain WH8102)).